Consider the following 194-residue polypeptide: GTP cyclohydrolase 1 (194 aa).

Zn(2+) is bound by residues cysteine 83, histidine 86, and cysteine 155.

It belongs to the GTP cyclohydrolase I family. Toroid-shaped homodecamer, composed of two pentamers of five dimers.

It carries out the reaction GTP + H2O = 7,8-dihydroneopterin 3'-triphosphate + formate + H(+). The protein operates within cofactor biosynthesis; 7,8-dihydroneopterin triphosphate biosynthesis; 7,8-dihydroneopterin triphosphate from GTP: step 1/1. The chain is GTP cyclohydrolase 1 from Streptococcus pyogenes serotype M3 (strain ATCC BAA-595 / MGAS315).